The sequence spans 1589 residues: Pentafunctional AROM polypeptide (1589 aa).

Residues 1 to 392 (MVKFEKVPIL…YGKSAHYVND (392 aa)) form a 3-dehydroquinate synthase region. NAD(+)-binding positions include 43–45 (DTN), 78–81 (EANK), 109–111 (GGI), and D114. R125 serves as a coordination point for 7-phospho-2-dehydro-3-deoxy-D-arabino-heptonate. Residue 134–135 (TS) participates in NAD(+) binding. Positions 141 and 147 each coordinate 7-phospho-2-dehydro-3-deoxy-D-arabino-heptonate. K156 serves as a coordination point for NAD(+). N157 is a binding site for 7-phospho-2-dehydro-3-deoxy-D-arabino-heptonate. NAD(+)-binding positions include 174-177 (WLET) and N185. E189 provides a ligand contact to Zn(2+). 7-phospho-2-dehydro-3-deoxy-D-arabino-heptonate contacts are provided by residues 189–192 (EVIK) and K258. The Proton acceptor; for 3-dehydroquinate synthase activity role is filled by E268. 7-phospho-2-dehydro-3-deoxy-D-arabino-heptonate is bound by residues 272–276 (RNLLN) and H279. H279 lines the Zn(2+) pocket. The Proton acceptor; for 3-dehydroquinate synthase activity role is filled by H283. 2 residues coordinate 7-phospho-2-dehydro-3-deoxy-D-arabino-heptonate: H295 and K364. H295 provides a ligand contact to Zn(2+). The segment at 405–872 (VYPFSNIPQE…WDVLHTELGA (468 aa)) is EPSP synthase. Catalysis depends on C854, which acts as the For EPSP synthase activity. Residues 891–1081 (SVVLIGMRAA…VPNKRSAFVC (191 aa)) form a shikimate kinase region. 896 to 903 (GMRAAGKS) provides a ligand contact to ATP. The segment at 1082–1294 (LTFGDLTEKA…SAPGQLTLAQ (213 aa)) is 3-dehydroquinase. The active-site Proton acceptor; for 3-dehydroquinate dehydratase activity is H1199. The active-site Schiff-base intermediate with substrate; for 3-dehydroquinate dehydratase activity is the K1228. Residues 1307-1589 (SKKFFVVGNP…QEIFNAVTRD (283 aa)) are shikimate dehydrogenase.

The protein in the N-terminal section; belongs to the sugar phosphate cyclases superfamily. Dehydroquinate synthase family. This sequence in the 2nd section; belongs to the EPSP synthase family. In the 3rd section; belongs to the shikimate kinase family. It in the 4th section; belongs to the type-I 3-dehydroquinase family. The protein in the C-terminal section; belongs to the shikimate dehydrogenase family. Homodimer. Requires Zn(2+) as cofactor.

The protein localises to the cytoplasm. The enzyme catalyses 7-phospho-2-dehydro-3-deoxy-D-arabino-heptonate = 3-dehydroquinate + phosphate. The catalysed reaction is 3-dehydroquinate = 3-dehydroshikimate + H2O. It catalyses the reaction shikimate + NADP(+) = 3-dehydroshikimate + NADPH + H(+). It carries out the reaction shikimate + ATP = 3-phosphoshikimate + ADP + H(+). The enzyme catalyses 3-phosphoshikimate + phosphoenolpyruvate = 5-O-(1-carboxyvinyl)-3-phosphoshikimate + phosphate. Its pathway is metabolic intermediate biosynthesis; chorismate biosynthesis; chorismate from D-erythrose 4-phosphate and phosphoenolpyruvate: step 2/7. It participates in metabolic intermediate biosynthesis; chorismate biosynthesis; chorismate from D-erythrose 4-phosphate and phosphoenolpyruvate: step 3/7. The protein operates within metabolic intermediate biosynthesis; chorismate biosynthesis; chorismate from D-erythrose 4-phosphate and phosphoenolpyruvate: step 4/7. It functions in the pathway metabolic intermediate biosynthesis; chorismate biosynthesis; chorismate from D-erythrose 4-phosphate and phosphoenolpyruvate: step 5/7. Its pathway is metabolic intermediate biosynthesis; chorismate biosynthesis; chorismate from D-erythrose 4-phosphate and phosphoenolpyruvate: step 6/7. Its function is as follows. The AROM polypeptide catalyzes 5 consecutive enzymatic reactions in prechorismate polyaromatic amino acid biosynthesis. The protein is Pentafunctional AROM polypeptide of Zygosaccharomyces rouxii (strain ATCC 2623 / CBS 732 / NBRC 1130 / NCYC 568 / NRRL Y-229).